A 297-amino-acid chain; its full sequence is Leucine-rich repeat-containing protein 25 (297 aa).

The first 25 residues, Met1–Ser25, serve as a signal peptide directing secretion. Over Gln26–Thr169 the chain is Extracellular. N-linked (GlcNAc...) asparagine glycans are attached at residues Asn44 and Asn49. LRR repeat units follow at residues His66–Glu89 and Lys90–Asp113. N-linked (GlcNAc...) asparagine glycans are attached at residues Asn133 and Asn152. Residues Ile170–Ala190 traverse the membrane as a helical segment. Over Trp191–Arg297 the chain is Cytoplasmic. Residues Glu202–Thr244 form a disordered region. Phosphoserine occurs at positions 211, 238, and 267. Position 289 is a phosphotyrosine (Tyr289).

As to quaternary structure, interacts with RIGI. Interacts with SQSTM1. Interacts with p65/RELA; this interaction promotes the degradation of RELA through autophagy.

It localises to the membrane. The protein localises to the cytoplasm. Plays a role in the inhibition of RLR-mediated type I interferon signaling pathway by targeting RIGI for autophagic degradation. Interacts specifically with ISG15-associated RIGI to promote interaction between RIGI and the autophagic cargo receptor p62/SQSTM1 to mediate RIGI degradation via selective autophagy. Plays also a role in the inhibition of NF-kappa-B signaling pathway and inflammatory response by promoting the degradation of p65/RELA. The sequence is that of Leucine-rich repeat-containing protein 25 (Lrrc25) from Mus musculus (Mouse).